The primary structure comprises 513 residues: Na(+)/H(+) antiporter NhaB (513 aa).

The next 9 membrane-spanning stretches (helical) occupy residues 21 to 41 (ICII…SPFV), 88 to 108 (IMAN…IYFM), 119 to 139 (LLIV…SATF), 243 to 263 (LPVS…LEHF), 299 to 318 (MGIQ…LHLA), 322 to 344 (IIGL…HAIG), 350 to 370 (PMPF…IVDL), 389 to 409 (LALF…VFVG), and 477 to 497 (MALP…EFLL).

This sequence belongs to the NhaB Na(+)/H(+) (TC 2.A.34) antiporter family.

It localises to the cell inner membrane. The enzyme catalyses 2 Na(+)(in) + 3 H(+)(out) = 2 Na(+)(out) + 3 H(+)(in). Functionally, na(+)/H(+) antiporter that extrudes sodium in exchange for external protons. The polypeptide is Na(+)/H(+) antiporter NhaB (Actinobacillus pleuropneumoniae serotype 5b (strain L20)).